An 822-amino-acid chain; its full sequence is Myosin-D (822 aa).

Positions Leu-95 to Arg-770 constitute a Myosin motor domain. Gly-189–Thr-196 contacts ATP. The interval Ser-660–Asp-670 is actin-binding. Residues Ala-772–Cys-822 form a tail region.

This sequence belongs to the TRAFAC class myosin-kinesin ATPase superfamily. Myosin family.

Its subcellular location is the cell membrane. The protein resides in the cytoplasm. Myosins are actin-based motor molecules with ATPase activity. Unconventional myosins serve in intracellular movements. Their highly divergent tails are presumed to bind to membranous compartments, which would be moved relative to actin filaments. The polypeptide is Myosin-D (Toxoplasma gondii).